A 321-amino-acid chain; its full sequence is Acetyl-coenzyme A carboxylase carboxyl transferase subunit alpha (321 aa).

A CoA carboxyltransferase C-terminal domain is found at 39 to 293 (RLQQKSQTLA…RRALGDSLRQ (255 aa)).

This sequence belongs to the AccA family. In terms of assembly, acetyl-CoA carboxylase is a heterohexamer composed of biotin carboxyl carrier protein (AccB), biotin carboxylase (AccC) and two subunits each of ACCase subunit alpha (AccA) and ACCase subunit beta (AccD).

The protein resides in the cytoplasm. The catalysed reaction is N(6)-carboxybiotinyl-L-lysyl-[protein] + acetyl-CoA = N(6)-biotinyl-L-lysyl-[protein] + malonyl-CoA. Its pathway is lipid metabolism; malonyl-CoA biosynthesis; malonyl-CoA from acetyl-CoA: step 1/1. Functionally, component of the acetyl coenzyme A carboxylase (ACC) complex. First, biotin carboxylase catalyzes the carboxylation of biotin on its carrier protein (BCCP) and then the CO(2) group is transferred by the carboxyltransferase to acetyl-CoA to form malonyl-CoA. In Bordetella avium (strain 197N), this protein is Acetyl-coenzyme A carboxylase carboxyl transferase subunit alpha.